Consider the following 501-residue polypeptide: Glucose-6-phosphate isomerase (501 aa).

The interval Gly-78–Ser-101 is disordered. The span at Arg-86–Gly-97 shows a compositional bias: basic and acidic residues. Glu-333 (proton donor) is an active-site residue. Catalysis depends on residues His-364 and Lys-474.

Belongs to the GPI family.

It localises to the cytoplasm. It catalyses the reaction alpha-D-glucose 6-phosphate = beta-D-fructose 6-phosphate. The protein operates within carbohydrate biosynthesis; gluconeogenesis. It functions in the pathway carbohydrate degradation; glycolysis; D-glyceraldehyde 3-phosphate and glycerone phosphate from D-glucose: step 2/4. Functionally, catalyzes the reversible isomerization of glucose-6-phosphate to fructose-6-phosphate. This chain is Glucose-6-phosphate isomerase, found in Sphingopyxis alaskensis (strain DSM 13593 / LMG 18877 / RB2256) (Sphingomonas alaskensis).